The following is a 568-amino-acid chain: Estrogen receptor beta (568 aa).

The segment at 1–177 is modulating; the sequence is MHQQSPVDDV…SLRGKADMHY (177 aa). NR C4-type zinc fingers lie at residues 178-198 and 214-238; these read CAVC…CEGC and CPAT…LRKC. A DNA-binding region (nuclear receptor) is located at residues 178-243; that stretch reads CAVCSDYASG…RLRKCYEVGM (66 aa). An NR LBD domain is found at 300–536; it reads TPEELIARIM…DLLLEMLDAH (237 aa).

It belongs to the nuclear hormone receptor family. NR3 subfamily. In terms of assembly, binds DNA as a homodimer. Can form a heterodimer with ER-alpha.

The protein localises to the nucleus. Binds estrogens with an affinity similar to that of ER-alpha, and activates expression of reporter genes containing estrogen response elements (ERE) in an estrogen-dependent manner. The polypeptide is Estrogen receptor beta (esr2) (Oncorhynchus mykiss (Rainbow trout)).